The sequence spans 517 residues: Ribonuclease Y (517 aa).

The chain crosses the membrane as a helical span at residues 4–24; the sequence is LIYIVILFVGIAAGAFFGISV. The KH domain occupies 207 to 267; sequence TISTVALPND…LRREVARRTI (61 aa). One can recognise an HD domain in the interval 333–426; the sequence is VLAHSVEVAQ…VAAADAISAA (94 aa).

Belongs to the RNase Y family.

It is found in the cell membrane. Its function is as follows. Endoribonuclease that initiates mRNA decay. The polypeptide is Ribonuclease Y (Fervidobacterium nodosum (strain ATCC 35602 / DSM 5306 / Rt17-B1)).